We begin with the raw amino-acid sequence, 146 residues long: Hemoglobin subunit beta (146 aa).

At Val1 the chain carries N-acetylvaline. One can recognise a Globin domain in the interval 2–146; that stretch reads HLTDAEKAAV…VATALAHKYH (145 aa). Ser44 bears the Phosphoserine mark. Lys59 is modified (N6-acetyllysine). His63 is a binding site for heme b. N6-acetyllysine is present on Lys82. His92 is a heme b binding site. An S-nitrosocysteine modification is found at Cys93. Position 144 is an N6-acetyllysine (Lys144).

The protein belongs to the globin family. Heterotetramer of two alpha chains and two beta chains. As to expression, red blood cells.

Involved in oxygen transport from the lung to the various peripheral tissues. The polypeptide is Hemoglobin subunit beta (HBB) (Spalax ehrenbergi (Middle East blind mole rat)).